A 104-amino-acid polypeptide reads, in one-letter code: Large ribosomal subunit protein uL24 (104 aa).

The protein belongs to the universal ribosomal protein uL24 family. Part of the 50S ribosomal subunit.

One of two assembly initiator proteins, it binds directly to the 5'-end of the 23S rRNA, where it nucleates assembly of the 50S subunit. In terms of biological role, one of the proteins that surrounds the polypeptide exit tunnel on the outside of the subunit. The sequence is that of Large ribosomal subunit protein uL24 from Treponema denticola (strain ATCC 35405 / DSM 14222 / CIP 103919 / JCM 8153 / KCTC 15104).